A 423-amino-acid polypeptide reads, in one-letter code: UDP-N-acetylglucosamine 1-carboxyvinyltransferase (423 aa).

22–23 (KN) contacts phosphoenolpyruvate. R93 lines the UDP-N-acetyl-alpha-D-glucosamine pocket. Catalysis depends on C117, which acts as the Proton donor. A 2-(S-cysteinyl)pyruvic acid O-phosphothioketal modification is found at C117. D305 and I327 together coordinate UDP-N-acetyl-alpha-D-glucosamine.

The protein belongs to the EPSP synthase family. MurA subfamily.

Its subcellular location is the cytoplasm. The enzyme catalyses phosphoenolpyruvate + UDP-N-acetyl-alpha-D-glucosamine = UDP-N-acetyl-3-O-(1-carboxyvinyl)-alpha-D-glucosamine + phosphate. It functions in the pathway cell wall biogenesis; peptidoglycan biosynthesis. Cell wall formation. Adds enolpyruvyl to UDP-N-acetylglucosamine. This chain is UDP-N-acetylglucosamine 1-carboxyvinyltransferase, found in Acidithiobacillus ferrooxidans (strain ATCC 23270 / DSM 14882 / CIP 104768 / NCIMB 8455) (Ferrobacillus ferrooxidans (strain ATCC 23270)).